We begin with the raw amino-acid sequence, 435 residues long: ATP-dependent protease ATPase subunit HslU (435 aa).

Residues Ile18, 60–65, Asp248, Glu313, and Arg385 each bind ATP; that span reads GVGKTE.

This sequence belongs to the ClpX chaperone family. HslU subfamily. In terms of assembly, a double ring-shaped homohexamer of HslV is capped on each side by a ring-shaped HslU homohexamer. The assembly of the HslU/HslV complex is dependent on binding of ATP.

The protein resides in the cytoplasm. Functionally, ATPase subunit of a proteasome-like degradation complex; this subunit has chaperone activity. The binding of ATP and its subsequent hydrolysis by HslU are essential for unfolding of protein substrates subsequently hydrolyzed by HslV. HslU recognizes the N-terminal part of its protein substrates and unfolds these before they are guided to HslV for hydrolysis. This chain is ATP-dependent protease ATPase subunit HslU, found in Ruegeria pomeroyi (strain ATCC 700808 / DSM 15171 / DSS-3) (Silicibacter pomeroyi).